The following is a 976-amino-acid chain: Ephrin type-A receptor 1 (976 aa).

Positions 1 to 25 are cleaved as a signal peptide; it reads MERRWPLGLGLVLLLCAPLPPGARA. Topologically, residues 26 to 547 are extracellular; the sequence is KEVTLMDTSK…PVSRGLTGGE (522 aa). One can recognise an Eph LBD domain in the interval 27-209; sequence EVTLMDTSKA…FYQRCPETLN (183 aa). Fibronectin type-III domains follow at residues 332-445 and 447-538; these read PPSA…MGHA and SLSG…TSPP. An N-linked (GlcNAc...) asparagine glycan is attached at N414. Residues 548 to 568 traverse the membrane as a helical segment; the sequence is IVAVIFGLLLGAALLLGILVF. The Cytoplasmic segment spans residues 569 to 976; that stretch reads RSRRAQRQRQ…ILCSIQGFKD (408 aa). Phosphotyrosine; by autocatalysis is present on residues Y599 and Y605. The region spanning 624–884 is the Protein kinase domain; sequence LMVDTVIGEG…KLQAHLEQLL (261 aa). ATP-binding positions include 630–638 and K656; that span reads IGEGEFGEV. D749 (proton acceptor) is an active-site residue. Position 781 is a phosphotyrosine; by autocatalysis (Y781). 2 positions are modified to phosphoserine: S906 and S910. One can recognise an SAM domain in the interval 913 to 976; that stretch reads IPYRTVSEWL…ILCSIQGFKD (64 aa). Y930 carries the post-translational modification Phosphotyrosine; by autocatalysis. The PDZ-binding signature appears at 974-976; sequence FKD.

The protein belongs to the protein kinase superfamily. Tyr protein kinase family. Ephrin receptor subfamily. In terms of assembly, homodimer. Forms a signaling complex with LCK; PTK2B/PYK2 and PI3-kinase upon activation by EFNA1; regulates T-lymphocytes migration. Interacts (via SAM domain) with ILK (via ANK repeats); stimulated by EFNA1 but independent of the kinase activity of EPHA1. Interacts (kinase activity-dependent) with PTK2/FAK1. Post-translationally, phosphorylated. Autophosphorylation is stimulated by its ligand EFNA1. Ubiquitinated. Overexpressed in several carcinomas.

Its subcellular location is the cell membrane. The catalysed reaction is L-tyrosyl-[protein] + ATP = O-phospho-L-tyrosyl-[protein] + ADP + H(+). Receptor tyrosine kinase which binds promiscuously membrane-bound ephrin-A family ligands residing on adjacent cells, leading to contact-dependent bidirectional signaling into neighboring cells. The signaling pathway downstream of the receptor is referred to as forward signaling while the signaling pathway downstream of the ephrin ligand is referred to as reverse signaling. Binds with a low affinity EFNA3 and EFNA4 and with a high affinity to EFNA1 which most probably constitutes its cognate/functional ligand. Upon activation by EFNA1 induces cell attachment to the extracellular matrix inhibiting cell spreading and motility through regulation of ILK and downstream RHOA and RAC. Also plays a role in angiogenesis and regulates cell proliferation. May play a role in apoptosis. This is Ephrin type-A receptor 1 (EPHA1) from Homo sapiens (Human).